The primary structure comprises 249 residues: Ubiquinone/menaquinone biosynthesis C-methyltransferase UbiE (249 aa).

S-adenosyl-L-methionine contacts are provided by residues threonine 72, aspartate 93, and aspartate 121 to alanine 122.

It belongs to the class I-like SAM-binding methyltransferase superfamily. MenG/UbiE family.

The catalysed reaction is a 2-demethylmenaquinol + S-adenosyl-L-methionine = a menaquinol + S-adenosyl-L-homocysteine + H(+). The enzyme catalyses a 2-methoxy-6-(all-trans-polyprenyl)benzene-1,4-diol + S-adenosyl-L-methionine = a 5-methoxy-2-methyl-3-(all-trans-polyprenyl)benzene-1,4-diol + S-adenosyl-L-homocysteine + H(+). The protein operates within quinol/quinone metabolism; menaquinone biosynthesis; menaquinol from 1,4-dihydroxy-2-naphthoate: step 2/2. It participates in cofactor biosynthesis; ubiquinone biosynthesis. Its function is as follows. Methyltransferase required for the conversion of demethylmenaquinol (DMKH2) to menaquinol (MKH2) and the conversion of 2-polyprenyl-6-methoxy-1,4-benzoquinol (DDMQH2) to 2-polyprenyl-3-methyl-6-methoxy-1,4-benzoquinol (DMQH2). This chain is Ubiquinone/menaquinone biosynthesis C-methyltransferase UbiE, found in Cellvibrio japonicus (strain Ueda107) (Pseudomonas fluorescens subsp. cellulosa).